A 477-amino-acid chain; its full sequence is UDP-glycosyltransferase 71K1 (477 aa).

Residues serine 285, tryptophan 350–alanine 351, histidine 368–glutamate 376, and tyrosine 390–glutamine 393 contribute to the UDP-alpha-D-glucose site.

The protein belongs to the UDP-glycosyltransferase family.

Its function is as follows. Glycosyltransferase that possesses chalcone and flavonol 2'-O-glycosyltransferase activity. Converts phloretin to phlorizin (phloretin 2'-O-glucoside), a potent antioxidant. Possesses glycosyltransferase activity toward quercetin, isoliquiritigenin, butein and caffeic acid. This Malus domestica (Apple) protein is UDP-glycosyltransferase 71K1.